A 258-amino-acid chain; its full sequence is Imidazole glycerol phosphate synthase subunit HisF (258 aa).

Active-site residues include Asp11 and Asp130.

It belongs to the HisA/HisF family. Heterodimer of HisH and HisF.

It localises to the cytoplasm. It carries out the reaction 5-[(5-phospho-1-deoxy-D-ribulos-1-ylimino)methylamino]-1-(5-phospho-beta-D-ribosyl)imidazole-4-carboxamide + L-glutamine = D-erythro-1-(imidazol-4-yl)glycerol 3-phosphate + 5-amino-1-(5-phospho-beta-D-ribosyl)imidazole-4-carboxamide + L-glutamate + H(+). Its pathway is amino-acid biosynthesis; L-histidine biosynthesis; L-histidine from 5-phospho-alpha-D-ribose 1-diphosphate: step 5/9. In terms of biological role, IGPS catalyzes the conversion of PRFAR and glutamine to IGP, AICAR and glutamate. The HisF subunit catalyzes the cyclization activity that produces IGP and AICAR from PRFAR using the ammonia provided by the HisH subunit. The sequence is that of Imidazole glycerol phosphate synthase subunit HisF from Blochmanniella pennsylvanica (strain BPEN).